The primary structure comprises 217 residues: GrpE protein homolog 1, mitochondrial (217 aa).

A mitochondrion-targeting transit peptide spans 1 to 27 (MAAQCVRLARRSLPALALSLRPSPRLL). The segment at 29-56 (TATKQKNSGQNLEEDMGQSEQKADPPAT) is disordered. Polar residues predominate over residues 30–39 (ATKQKNSGQN). An N6-acetyllysine; alternate modification is found at K94. K94 is subject to N6-succinyllysine; alternate. K100 carries the post-translational modification N6-acetyllysine. Position 120 is an N6-succinyllysine (K120). K215 carries the N6-acetyllysine; alternate modification. The residue at position 215 (K215) is an N6-succinyllysine; alternate.

The protein belongs to the GrpE family. Probable component of the PAM complex at least composed of a mitochondrial HSP70 protein, GRPEL1 or GRPEL2, TIMM44, TIMM16/PAM16 and TIMM14/DNAJC19. Binds to HSP70, HSC70 and HSJ1B.

The protein resides in the mitochondrion matrix. Essential component of the PAM complex, a complex required for the translocation of transit peptide-containing proteins from the inner membrane into the mitochondrial matrix in an ATP-dependent manner. Seems to control the nucleotide-dependent binding of mitochondrial HSP70 to substrate proteins. The sequence is that of GrpE protein homolog 1, mitochondrial (GRPEL1) from Homo sapiens (Human).